The primary structure comprises 184 residues: UPF0398 protein BC_1561 (184 aa).

This sequence belongs to the UPF0398 family.

In Bacillus cereus (strain ATCC 14579 / DSM 31 / CCUG 7414 / JCM 2152 / NBRC 15305 / NCIMB 9373 / NCTC 2599 / NRRL B-3711), this protein is UPF0398 protein BC_1561.